A 381-amino-acid chain; its full sequence is S-adenosylmethionine synthase (381 aa).

Position 15 (H15) interacts with ATP. D17 is a binding site for Mg(2+). E43 serves as a coordination point for K(+). The L-methionine site is built by E56 and Q99. Positions 99–109 are flexible loop; the sequence is QSPDINQGVDR. Residues 164 to 166, 230 to 231, D239, 245 to 246, A262, and K266 each bind ATP; these read DAK, RF, and RK. D239 is a binding site for L-methionine. An L-methionine-binding site is contributed by K270.

It belongs to the AdoMet synthase family. As to quaternary structure, homotetramer; dimer of dimers. Requires Mg(2+) as cofactor. The cofactor is K(+).

Its subcellular location is the cytoplasm. It carries out the reaction L-methionine + ATP + H2O = S-adenosyl-L-methionine + phosphate + diphosphate. It functions in the pathway amino-acid biosynthesis; S-adenosyl-L-methionine biosynthesis; S-adenosyl-L-methionine from L-methionine: step 1/1. Catalyzes the formation of S-adenosylmethionine (AdoMet) from methionine and ATP. The overall synthetic reaction is composed of two sequential steps, AdoMet formation and the subsequent tripolyphosphate hydrolysis which occurs prior to release of AdoMet from the enzyme. The sequence is that of S-adenosylmethionine synthase from Alteromonas mediterranea (strain DSM 17117 / CIP 110805 / LMG 28347 / Deep ecotype).